A 428-amino-acid polypeptide reads, in one-letter code: Gamma-glutamyl phosphate reductase (428 aa).

It belongs to the gamma-glutamyl phosphate reductase family.

Its subcellular location is the cytoplasm. The enzyme catalyses L-glutamate 5-semialdehyde + phosphate + NADP(+) = L-glutamyl 5-phosphate + NADPH + H(+). It functions in the pathway amino-acid biosynthesis; L-proline biosynthesis; L-glutamate 5-semialdehyde from L-glutamate: step 2/2. Catalyzes the NADPH-dependent reduction of L-glutamate 5-phosphate into L-glutamate 5-semialdehyde and phosphate. The product spontaneously undergoes cyclization to form 1-pyrroline-5-carboxylate. In Hyphomonas neptunium (strain ATCC 15444), this protein is Gamma-glutamyl phosphate reductase.